Consider the following 656-residue polypeptide: NADH-ubiquinone oxidoreductase chain 5 (656 aa).

17 helical membrane passes run 4-21 (TLII…FFGR), 28-50 (AHLI…FFEV), 81-103 (LTVS…SISY), 112-129 (RFFS…ILVT), 133-155 (YLIM…NFWF), 176-198 (TLLT…STVF), 208-230 (IITI…VGLH), 243-262 (VSAL…LLMR), 272-294 (TVLV…IGLF), 301-319 (VIAY…AVGL), 329-351 (LVNH…HAVA), 364-386 (EFLP…VPFM), 409-431 (IVYF…VLYL), 452-471 (LFMT…FGYL), 514-536 (FVFT…KLLI), 603-625 (SLGN…GLIF), and 629-651 (LLYF…FALL).

This sequence belongs to the complex I subunit 5 family.

It localises to the mitochondrion inner membrane. It carries out the reaction a ubiquinone + NADH + 5 H(+)(in) = a ubiquinol + NAD(+) + 4 H(+)(out). In terms of biological role, core subunit of the mitochondrial membrane respiratory chain NADH dehydrogenase (Complex I) that is believed to belong to the minimal assembly required for catalysis. Complex I functions in the transfer of electrons from NADH to the respiratory chain. The immediate electron acceptor for the enzyme is believed to be ubiquinone. The sequence is that of NADH-ubiquinone oxidoreductase chain 5 (nad5) from Aspergillus niger.